Consider the following 325-residue polypeptide: Serine/threonine-protein phosphatase 2A activator 1 (325 aa).

Belongs to the PTPA-type PPIase family.

It is found in the cytoplasm. The protein localises to the nucleus. It carries out the reaction [protein]-peptidylproline (omega=180) = [protein]-peptidylproline (omega=0). Its function is as follows. PPIases accelerate the folding of proteins. It catalyzes the cis-trans isomerization of proline imidic peptide bonds in oligopeptides. Acts as a regulatory subunit for PP2A-like phosphatases modulating their activity or substrate specificity, probably by inducing a conformational change in the catalytic subunit, a direct target of the PPIase. Can reactivate inactive phosphatase PP2A-phosphatase methylesterase complexes (PP2Ai) in presence of ATP and Mg(2+) by dissociating the inactive form from the complex. The chain is Serine/threonine-protein phosphatase 2A activator 1 (rrd1) from Schizosaccharomyces pombe (strain 972 / ATCC 24843) (Fission yeast).